The following is an 853-amino-acid chain: Penicillin-binding protein 1A (853 aa).

The Cytoplasmic segment spans residues 1–6 (MRIAKL). The chain crosses the membrane as a helical; Signal-anchor for type II membrane protein span at residues 7–27 (ILNTLLTLCILGLVAGGMLYF). Over 28–853 (HLKSELQQPM…TPATQPQELF (826 aa)) the chain is Periplasmic. The interval 37-205 (MQIYTADGKL…STMNPLYSLK (169 aa)) is transglycosylase. Glutamate 75 acts as the Proton donor; for transglycosylase activity in catalysis. The interval 387-681 (QRANGEWQLG…RVISGELAFL (295 aa)) is transpeptidase. The Acyl-ester intermediate; for transpeptidase activity role is filled by serine 441. The disordered stretch occupies residues 615 to 636 (NALKPTDDSTNGEELDQQPETV).

In the N-terminal section; belongs to the glycosyltransferase 51 family. This sequence in the C-terminal section; belongs to the transpeptidase family.

It localises to the cell inner membrane. The catalysed reaction is [GlcNAc-(1-&gt;4)-Mur2Ac(oyl-L-Ala-gamma-D-Glu-L-Lys-D-Ala-D-Ala)](n)-di-trans,octa-cis-undecaprenyl diphosphate + beta-D-GlcNAc-(1-&gt;4)-Mur2Ac(oyl-L-Ala-gamma-D-Glu-L-Lys-D-Ala-D-Ala)-di-trans,octa-cis-undecaprenyl diphosphate = [GlcNAc-(1-&gt;4)-Mur2Ac(oyl-L-Ala-gamma-D-Glu-L-Lys-D-Ala-D-Ala)](n+1)-di-trans,octa-cis-undecaprenyl diphosphate + di-trans,octa-cis-undecaprenyl diphosphate + H(+). It catalyses the reaction Preferential cleavage: (Ac)2-L-Lys-D-Ala-|-D-Ala. Also transpeptidation of peptidyl-alanyl moieties that are N-acyl substituents of D-alanine.. Its pathway is cell wall biogenesis; peptidoglycan biosynthesis. Its function is as follows. Cell wall formation. Synthesis of cross-linked peptidoglycan from the lipid intermediates. The enzyme has a penicillin-insensitive transglycosylase N-terminal domain (formation of linear glycan strands) and a penicillin-sensitive transpeptidase C-terminal domain (cross-linking of the peptide subunits). The protein is Penicillin-binding protein 1A (mrcA) of Haemophilus influenzae (strain ATCC 51907 / DSM 11121 / KW20 / Rd).